We begin with the raw amino-acid sequence, 443 residues long: Pentatricopeptide repeat-containing protein 6, mitochondrial (443 aa).

Residues 1–13 (MRILGSLPNNIRK) constitute a mitochondrion transit peptide. PPR repeat units follow at residues 130 to 164 (NIVDYTHILRVAMYTGNKHILEYIVARVKEKRIRP) and 220 to 254 (NSTTYDYLMVGLSRDGKIREIYDLIDTVWGINENS).

It localises to the mitochondrion. Functionally, mitochondrial RNA-binding protein required for the stability of the atp9 mRNA. The sequence is that of Pentatricopeptide repeat-containing protein 6, mitochondrial (ppr6) from Schizosaccharomyces pombe (strain 972 / ATCC 24843) (Fission yeast).